A 163-amino-acid chain; its full sequence is Lipoprotein signal peptidase (163 aa).

A run of 3 helical transmembrane segments spans residues 11 to 31, 63 to 83, and 88 to 108; these read ILIA…IATT, KMTF…YFFI, and YNLF…GNFI. Catalysis depends on residues D118 and D136. A helical membrane pass occupies residues 131-151; it reads IFNIADSSLTIGVILIIIALL.

Belongs to the peptidase A8 family.

Its subcellular location is the cell membrane. It catalyses the reaction Release of signal peptides from bacterial membrane prolipoproteins. Hydrolyzes -Xaa-Yaa-Zaa-|-(S,diacylglyceryl)Cys-, in which Xaa is hydrophobic (preferably Leu), and Yaa (Ala or Ser) and Zaa (Gly or Ala) have small, neutral side chains.. It functions in the pathway protein modification; lipoprotein biosynthesis (signal peptide cleavage). Its function is as follows. This protein specifically catalyzes the removal of signal peptides from prolipoproteins. The sequence is that of Lipoprotein signal peptidase from Staphylococcus aureus (strain MRSA252).